Reading from the N-terminus, the 465-residue chain is Hepatocyte nuclear factor 6 (465 aa).

Disordered stretches follow at residues 15–84 (GVSH…GPLH) and 119–141 (SDKF…HQRL). The span at 123 to 140 (PHHHHHHHHHHHPHHHQR) shows a compositional bias: basic residues. Residues 283-369 (GSNSGQMEEI…QRMSALRLAA (87 aa)) constitute a DNA-binding region (CUT). Positions 385 to 444 (PKKPRLVFTDVQRRTLHAIFKENKRPSKELQITISQQLGLELSTVSNFFMNARRRSLDKW) form a DNA-binding region, homeobox. Positions 443–465 (KWQDEGGSNSGSSSSSSSTCTKA) are disordered. Low complexity predominate over residues 448–465 (GGSNSGSSSSSSSTCTKA).

Belongs to the CUT homeobox family. In terms of assembly, binds DNA as a monomer.

It localises to the nucleus. Its function is as follows. Transcriptional activator. Binds the consensus sequence 5'-DHWATTGAYTWWD-3' on a variety of gene promoters such as those of HNF3B and TTR. Important for liver genes transcription. Stimulates the expression of Onecut3 in the developing endoderm. The polypeptide is Hepatocyte nuclear factor 6 (Onecut1) (Mus musculus (Mouse)).